A 788-amino-acid chain; its full sequence is Endonuclease MutS2 (788 aa).

Gly335–Thr342 provides a ligand contact to ATP. The disordered stretch occupies residues Val688–Ala708. Residues Gly699–Ala708 are compositionally biased toward polar residues. The Smr domain maps to Leu713–Lys788.

It belongs to the DNA mismatch repair MutS family. MutS2 subfamily. In terms of assembly, homodimer. Binds to stalled ribosomes, contacting rRNA.

Functionally, endonuclease that is involved in the suppression of homologous recombination and thus may have a key role in the control of bacterial genetic diversity. In terms of biological role, acts as a ribosome collision sensor, splitting the ribosome into its 2 subunits. Detects stalled/collided 70S ribosomes which it binds and splits by an ATP-hydrolysis driven conformational change. Acts upstream of the ribosome quality control system (RQC), a ribosome-associated complex that mediates the extraction of incompletely synthesized nascent chains from stalled ribosomes and their subsequent degradation. Probably generates substrates for RQC. This chain is Endonuclease MutS2, found in Exiguobacterium sibiricum (strain DSM 17290 / CCUG 55495 / CIP 109462 / JCM 13490 / 255-15).